The sequence spans 497 residues: Galactose/methyl galactoside import ATP-binding protein MglA (497 aa).

2 ABC transporter domains span residues 6–241 and 252–497; these read LEIK…VGRS and VPGE…AKYL. 38–45 is a binding site for ATP; sequence GENGAGKS.

Belongs to the ABC transporter superfamily. Galactose/methyl galactoside importer (TC 3.A.1.2.3) family. The complex is composed of one ATP-binding protein (MglA), two transmembrane proteins (MglC) and a solute-binding protein (MglB).

The protein localises to the cell inner membrane. The enzyme catalyses D-galactose(out) + ATP + H2O = D-galactose(in) + ADP + phosphate + H(+). The catalysed reaction is methyl beta-D-galactoside(out) + ATP + H2O = methyl beta-D-galactoside(in) + ADP + phosphate + H(+). Part of the ABC transporter complex MglABC involved in galactose/methyl galactoside import. Responsible for energy coupling to the transport system. This chain is Galactose/methyl galactoside import ATP-binding protein MglA, found in Treponema denticola (strain ATCC 35405 / DSM 14222 / CIP 103919 / JCM 8153 / KCTC 15104).